Reading from the N-terminus, the 186-residue chain is Elongation factor P (186 aa).

Belongs to the elongation factor P family.

It is found in the cytoplasm. It participates in protein biosynthesis; polypeptide chain elongation. Involved in peptide bond synthesis. Stimulates efficient translation and peptide-bond synthesis on native or reconstituted 70S ribosomes in vitro. Probably functions indirectly by altering the affinity of the ribosome for aminoacyl-tRNA, thus increasing their reactivity as acceptors for peptidyl transferase. The polypeptide is Elongation factor P (Laribacter hongkongensis (strain HLHK9)).